The primary structure comprises 149 residues: Prefoldin subunit alpha (149 aa).

Belongs to the prefoldin subunit alpha family. Heterohexamer of two alpha and four beta subunits.

Its subcellular location is the cytoplasm. Molecular chaperone capable of stabilizing a range of proteins. Seems to fulfill an ATP-independent, HSP70-like function in archaeal de novo protein folding. The polypeptide is Prefoldin subunit alpha (Methanospirillum hungatei JF-1 (strain ATCC 27890 / DSM 864 / NBRC 100397 / JF-1)).